A 425-amino-acid chain; its full sequence is Serine--tRNA ligase (425 aa).

230 to 232 (TAE) lines the L-serine pocket. Residue 261–263 (RSE) participates in ATP binding. L-serine is bound at residue glutamate 284. 348–351 (EISS) serves as a coordination point for ATP. Serine 384 is a binding site for L-serine.

The protein belongs to the class-II aminoacyl-tRNA synthetase family. Type-1 seryl-tRNA synthetase subfamily. Homodimer. The tRNA molecule binds across the dimer.

The protein resides in the cytoplasm. The catalysed reaction is tRNA(Ser) + L-serine + ATP = L-seryl-tRNA(Ser) + AMP + diphosphate + H(+). It carries out the reaction tRNA(Sec) + L-serine + ATP = L-seryl-tRNA(Sec) + AMP + diphosphate + H(+). The protein operates within aminoacyl-tRNA biosynthesis; selenocysteinyl-tRNA(Sec) biosynthesis; L-seryl-tRNA(Sec) from L-serine and tRNA(Sec): step 1/1. Its function is as follows. Catalyzes the attachment of serine to tRNA(Ser). Is also able to aminoacylate tRNA(Sec) with serine, to form the misacylated tRNA L-seryl-tRNA(Sec), which will be further converted into selenocysteinyl-tRNA(Sec). The sequence is that of Serine--tRNA ligase from Streptococcus pyogenes serotype M28 (strain MGAS6180).